Here is a 160-residue protein sequence, read N- to C-terminus: Cyanate hydratase (160 aa).

Residues Arg100, Glu103, and Ser126 contribute to the active site.

The protein belongs to the cyanase family.

It catalyses the reaction cyanate + hydrogencarbonate + 3 H(+) = NH4(+) + 2 CO2. Its function is as follows. Catalyzes the reaction of cyanate with bicarbonate to produce ammonia and carbon dioxide. The polypeptide is Cyanate hydratase (Aspergillus oryzae (strain ATCC 42149 / RIB 40) (Yellow koji mold)).